A 291-amino-acid chain; its full sequence is uncharacterized protein (291 aa).

This sequence belongs to the pseudouridine synthase RluA family.

The enzyme catalyses a uridine in RNA = a pseudouridine in RNA. This is an uncharacterized protein from Synechocystis sp. (strain ATCC 27184 / PCC 6803 / Kazusa).